Reading from the N-terminus, the 361-residue chain is tRNA/tmRNA (uracil-C(5))-methyltransferase (361 aa).

Residues glutamine 183, tyrosine 211, asparagine 216, glutamate 232, and aspartate 294 each coordinate S-adenosyl-L-methionine. Residue cysteine 319 is the Nucleophile of the active site. The Proton acceptor role is filled by glutamate 353.

Belongs to the class I-like SAM-binding methyltransferase superfamily. RNA M5U methyltransferase family. TrmA subfamily.

It carries out the reaction uridine(54) in tRNA + S-adenosyl-L-methionine = 5-methyluridine(54) in tRNA + S-adenosyl-L-homocysteine + H(+). The catalysed reaction is uridine(341) in tmRNA + S-adenosyl-L-methionine = 5-methyluridine(341) in tmRNA + S-adenosyl-L-homocysteine + H(+). Functionally, dual-specificity methyltransferase that catalyzes the formation of 5-methyluridine at position 54 (m5U54) in all tRNAs, and that of position 341 (m5U341) in tmRNA (transfer-mRNA). This chain is tRNA/tmRNA (uracil-C(5))-methyltransferase, found in Acinetobacter baumannii (strain AB307-0294).